The following is a 524-amino-acid chain: FAD-dependent monooxygenase opdD (524 aa).

Residues glutamate 48 and arginine 145 each contribute to the FAD site.

Belongs to the paxM FAD-dependent monooxygenase family.

It functions in the pathway secondary metabolite biosynthesis. Functionally, FAD-dependent monooxygenase; part of the gene cluster that mediates the biosynthesis of oxopyrrolidines, polyketide-amino acid hybrid compounds with feature structures of tetramic acid. Does not seem to play a role in oxopyrrolidines A and B biosynthesis. May be involved in further modifications of these oxopyrrolidines. This chain is FAD-dependent monooxygenase opdD, found in Penicillium oxalicum (strain 114-2 / CGMCC 5302) (Penicillium decumbens).